Here is a 660-residue protein sequence, read N- to C-terminus: Putative ABC transporter ATP-binding MG390 (660 aa).

One can recognise a Peptidase C39 domain in the interval 6 to 126; sequence QEQQNECGIC…KLWTGYAATV (121 aa). Residue Cys-12 is part of the active site. 6 helical membrane passes run 150 to 170, 188 to 208, 265 to 285, 290 to 310, 379 to 399, and 402 to 422; these read LVTF…LLAT, LVVL…LQVI, YIPN…LIGI, FLLI…YDFF, SFFQ…GIIE, and YQLS…TYAT. The 194-residue stretch at 464–657 folds into the ABC transporter domain; it reads ISLENLSVTL…QNKINLTNYL (194 aa). 494-501 provides a ligand contact to ATP; that stretch reads GQNGSGKS.

The protein belongs to the ABC transporter superfamily.

It is found in the cell membrane. The sequence is that of Putative ABC transporter ATP-binding MG390 from Mycoplasma genitalium (strain ATCC 33530 / DSM 19775 / NCTC 10195 / G37) (Mycoplasmoides genitalium).